An 814-amino-acid polypeptide reads, in one-letter code: Phenylalanine--tRNA ligase beta subunit (814 aa).

The 115-residue stretch at 39-153 folds into the tRNA-binding domain; it reads SARAKGVVVG…ELPALGAPVA (115 aa). The region spanning 414 to 498 is the B5 domain; the sequence is ADASSVLLRR…RLVGFDRFGA (85 aa). Mg(2+) contacts are provided by aspartate 476, aspartate 482, glutamate 485, and glutamate 486. An FDX-ACB domain is found at 720–813; the sequence is PTVPASERDL…LVKQHGAELR (94 aa).

Belongs to the phenylalanyl-tRNA synthetase beta subunit family. Type 1 subfamily. As to quaternary structure, tetramer of two alpha and two beta subunits. Mg(2+) serves as cofactor.

Its subcellular location is the cytoplasm. The enzyme catalyses tRNA(Phe) + L-phenylalanine + ATP = L-phenylalanyl-tRNA(Phe) + AMP + diphosphate + H(+). This is Phenylalanine--tRNA ligase beta subunit from Parasynechococcus marenigrum (strain WH8102).